Here is a 321-residue protein sequence, read N- to C-terminus: Trem-like transcript 2 protein (321 aa).

The N-terminal stretch at methionine 1–serine 18 is a signal peptide. Over glycine 19–serine 268 the chain is Extracellular. The Ig-like V-type domain maps to proline 20–leucine 121. 2 disulfide bridges follow: cysteine 41–cysteine 105 and cysteine 56–cysteine 63. N-linked (GlcNAc...) asparagine glycosylation is present at asparagine 89. Composition is skewed to polar residues over residues glycine 189–aspartate 220 and serine 227–threonine 241. Residues glycine 189–threonine 241 are disordered. Residues threonine 269–tryptophan 289 traverse the membrane as a helical segment. The Cytoplasmic segment spans residues lysine 290 to isoleucine 321.

In terms of assembly, interacts with CD276 and this interaction enhances T-cell activation. As to expression, detected in cultured B-cells, T-cell leukemia and monocyte leukemia. Expressed constitutively on CD8 T-cells and induced on CD4 T-cells after activation.

It localises to the cell membrane. Cell surface receptor that may play a role in the innate and adaptive immune response. Acts as a counter-receptor for CD276 and interaction with CD276 on T-cells enhances T-cell activation. In Homo sapiens (Human), this protein is Trem-like transcript 2 protein (TREML2).